Reading from the N-terminus, the 588-residue chain is MITRLSTLFLRTLREDPADAEVPSHKLLVRAGYIRRVAPGIYSWLPLGLRAVRNIEAVVREEMDAIGGQELLFPALLPREPYETTQRWTEYGDSLFRLKDRKGADYLLGPTHEEMFAATVKDLYNSYKDFPVTLYQIQTKYRDEERPRAGVLRGREFVMKDSYSFDISDAGLDESYAKHRAAYQRIFDRLGLEYAICQATSGAMGGSASEEFLAVSENGEDTFVRSTSGNYAANVEAVVTQPGVERDIEGLPEAVTYETPVSETIDALVDWANSIDVQIEGREVTAADTLKCIVVKVREPGAEEAELTGILLPGDREVDMKRLEASLEPAEVELAVESDFADNPFLVKGYVGPVGLAKNGVKVLADPRVVTGTSWITGADEKERHVVGLVAGRDFTPDGFIEAAEIKEGDPAPAGEGTLTLARGIEIGHIFQLGRKYTEAFDVQILDENGKRAIPTMGSYGLGVTRLLAVLAEQRHDDAGLNWSVEVAPYQVHVVAANKDAAAIEAAERFAAELSAAGLDVLFDDRPKVSPGVKFKDAELLGMPFALILGRGYAEGKVELRVRGGEKSELDADQAVAQIVEMVAQARN.

Belongs to the class-II aminoacyl-tRNA synthetase family. ProS type 1 subfamily. Homodimer.

Its subcellular location is the cytoplasm. It carries out the reaction tRNA(Pro) + L-proline + ATP = L-prolyl-tRNA(Pro) + AMP + diphosphate. Catalyzes the attachment of proline to tRNA(Pro) in a two-step reaction: proline is first activated by ATP to form Pro-AMP and then transferred to the acceptor end of tRNA(Pro). As ProRS can inadvertently accommodate and process non-cognate amino acids such as alanine and cysteine, to avoid such errors it has two additional distinct editing activities against alanine. One activity is designated as 'pretransfer' editing and involves the tRNA(Pro)-independent hydrolysis of activated Ala-AMP. The other activity is designated 'posttransfer' editing and involves deacylation of mischarged Ala-tRNA(Pro). The misacylated Cys-tRNA(Pro) is not edited by ProRS. This chain is Proline--tRNA ligase, found in Corynebacterium glutamicum (strain ATCC 13032 / DSM 20300 / JCM 1318 / BCRC 11384 / CCUG 27702 / LMG 3730 / NBRC 12168 / NCIMB 10025 / NRRL B-2784 / 534).